A 480-amino-acid chain; its full sequence is Uronate isomerase (480 aa).

Belongs to the metallo-dependent hydrolases superfamily. Uronate isomerase family.

It catalyses the reaction D-glucuronate = D-fructuronate. The enzyme catalyses aldehydo-D-galacturonate = keto-D-tagaturonate. The protein operates within carbohydrate metabolism; pentose and glucuronate interconversion. This Phenylobacterium zucineum (strain HLK1) protein is Uronate isomerase.